The primary structure comprises 259 residues: Phosphatidylglycerol--prolipoprotein diacylglyceryl transferase (259 aa).

A run of 4 helical transmembrane segments spans residues 12–32 (LAIHWYALCILSGLVLAVYLA), 41–61 (ISSDAIFDFILIAFPLAIVGA), 80–100 (IIAIWNGGIAIYGGLITGALV), and 109–129 (VLNPIHFLDIAAPSVMVAQAI). Arginine 131 is an a 1,2-diacyl-sn-glycero-3-phospho-(1'-sn-glycerol) binding site. A run of 3 helical transmembrane segments spans residues 167–187 (IPTFLYESLWNLLGFVIIMMW), 194–214 (LLDGEIFAFYLIWYGSGRLVI), and 226–246 (GIRISQYVSALLIIIGLIFVI).

This sequence belongs to the Lgt family.

It is found in the cell membrane. It carries out the reaction L-cysteinyl-[prolipoprotein] + a 1,2-diacyl-sn-glycero-3-phospho-(1'-sn-glycerol) = an S-1,2-diacyl-sn-glyceryl-L-cysteinyl-[prolipoprotein] + sn-glycerol 1-phosphate + H(+). It functions in the pathway protein modification; lipoprotein biosynthesis (diacylglyceryl transfer). Its function is as follows. Catalyzes the transfer of the diacylglyceryl group from phosphatidylglycerol to the sulfhydryl group of the N-terminal cysteine of a prolipoprotein, the first step in the formation of mature lipoproteins. The protein is Phosphatidylglycerol--prolipoprotein diacylglyceryl transferase of Streptococcus pyogenes serotype M49 (strain NZ131).